A 285-amino-acid polypeptide reads, in one-letter code: RNA polymerase sigma factor RpoH (285 aa).

Positions 53–122 (LILSHLRFVV…IHEYVLRNWR (70 aa)) are sigma-70 factor domain-2. The short motif at 77–80 (DLIQ) is the Interaction with polymerase core subunit RpoC element. A sigma-70 factor domain-4 region spans residues 229–281 (AMEGLDERSQDIIRARWLDEDNKSTLQELADRYGVSAERVRQLEKNAMKKLRA). The segment at residues 254–273 (LQELADRYGVSAERVRQLEK) is a DNA-binding region (H-T-H motif).

This sequence belongs to the sigma-70 factor family. RpoH subfamily. As to quaternary structure, interacts with the RNA polymerase core enzyme.

Its subcellular location is the cytoplasm. In terms of biological role, sigma factors are initiation factors that promote the attachment of RNA polymerase to specific initiation sites and are then released. This sigma factor is involved in regulation of expression of heat shock genes. This is RNA polymerase sigma factor RpoH from Enterobacter cloacae.